A 519-amino-acid chain; its full sequence is Protein disulfide-isomerase A5 (519 aa).

A signal peptide spans 1 to 21 (MARAGPAWLLLAIWVVLPSWL). Cystine bridges form between Cys85-Cys94, Cys182-Cys185, Cys305-Cys308, and Cys426-Cys429. Thioredoxin domains are found at residues 134–261 (FLKD…NPQP), 270–384 (PWAD…NPEA), and 378–506 (WMQN…ALRE). Residues 516–519 (KEEL) carry the Prevents secretion from ER motif.

The protein belongs to the protein disulfide isomerase family. In terms of assembly, interacts with CALR (via P-domain).

It is found in the endoplasmic reticulum lumen. It catalyses the reaction Catalyzes the rearrangement of -S-S- bonds in proteins.. This is Protein disulfide-isomerase A5 (PDIA5) from Homo sapiens (Human).